An 86-amino-acid polypeptide reads, in one-letter code: Small ribosomal subunit protein bS16 (86 aa).

This sequence belongs to the bacterial ribosomal protein bS16 family.

The protein is Small ribosomal subunit protein bS16 of Leptothrix cholodnii (strain ATCC 51168 / LMG 8142 / SP-6) (Leptothrix discophora (strain SP-6)).